Reading from the N-terminus, the 286-residue chain is Bark leucoagglutinin (286 aa).

An N-terminal signal peptide occupies residues A1–S28. Y73 provides a ligand contact to N-acetyl-alpha-neuraminyl-(2-&gt;3)-beta-D-galactosyl-(1-&gt;4)-beta-D-glucose. N89 carries N-linked (GlcNAc...) asparagine glycosylation. N-acetyl-alpha-neuraminyl-(2-&gt;3)-beta-D-galactosyl-(1-&gt;4)-beta-D-glucose is bound by residues D115 and K135. N-linked (GlcNAc...) asparagine glycosylation is present at N141. 2 residues coordinate Mn(2+): E155 and D157. 4 residues coordinate Ca(2+): D157, Y159, D165, and D168. N-acetyl-alpha-neuraminyl-(2-&gt;3)-beta-D-galactosyl-(1-&gt;4)-beta-D-glucose-binding residues include Y159 and D165. Residues D168 and H173 each contribute to the Mn(2+) site. N207 and N219 each carry an N-linked (GlcNAc...) asparagine glycan. The propeptide at N278 to A286 is removed in mature form.

This sequence belongs to the leguminous lectin family.

In terms of biological role, sialic acid-binding lectin specifically recognizing the trisaccharide sequence Neu5Ac/Gc-alpha-2,3-Gal-beta-1,4-GlcNAc/Glc. The protein is Bark leucoagglutinin of Maackia amurensis (Amur maackia).